The sequence spans 540 residues: NADH-quinone oxidoreductase subunit N (540 aa).

The next 14 membrane-spanning stretches (helical) occupy residues 24–44 (LSPM…EAFL), 54–74 (LVLA…LAGT), 88–108 (PTLF…LIIA), 158–178 (APGH…MLLF), 184–204 (LLTM…LCGL), 219–239 (YFLL…LLYG), 263–283 (ALIG…AVPF), 295–315 (PTPI…GAML), 331–351 (PVMW…AVTQ), 357–377 (MLAY…VAAN), 385–405 (MFYL…VTLV), 428–448 (VGGV…TSGF), 462–482 (GAVP…FFYV), and 505–525 (MFTA…GILP).

Belongs to the complex I subunit 2 family. As to quaternary structure, NDH-1 is composed of 14 different subunits. Subunits NuoA, H, J, K, L, M, N constitute the membrane sector of the complex.

The protein resides in the cell membrane. It catalyses the reaction a quinone + NADH + 5 H(+)(in) = a quinol + NAD(+) + 4 H(+)(out). Its function is as follows. NDH-1 shuttles electrons from NADH, via FMN and iron-sulfur (Fe-S) centers, to quinones in the respiratory chain. The immediate electron acceptor for the enzyme in this species is believed to be a menaquinone. Couples the redox reaction to proton translocation (for every two electrons transferred, four hydrogen ions are translocated across the cytoplasmic membrane), and thus conserves the redox energy in a proton gradient. This chain is NADH-quinone oxidoreductase subunit N, found in Rhodococcus opacus (strain B4).